Reading from the N-terminus, the 407-residue chain is 1-deoxy-D-xylulose 5-phosphate reductoisomerase (407 aa).

Residues Thr25, Gly26, Ser27, Ile28, Asn53, and Asn136 each coordinate NADPH. Lys137 serves as a coordination point for 1-deoxy-D-xylulose 5-phosphate. Position 138 (Glu138) interacts with NADPH. Asp162 lines the Mn(2+) pocket. Residues Ser163, Glu164, Ser188, and His211 each contribute to the 1-deoxy-D-xylulose 5-phosphate site. Glu164 is a binding site for Mn(2+). Gly217 contacts NADPH. Residues Ser224, Asn229, Lys230, and Glu233 each contribute to the 1-deoxy-D-xylulose 5-phosphate site. Position 233 (Glu233) interacts with Mn(2+).

It belongs to the DXR family. The cofactor is Mg(2+). Mn(2+) is required as a cofactor.

It carries out the reaction 2-C-methyl-D-erythritol 4-phosphate + NADP(+) = 1-deoxy-D-xylulose 5-phosphate + NADPH + H(+). It functions in the pathway isoprenoid biosynthesis; isopentenyl diphosphate biosynthesis via DXP pathway; isopentenyl diphosphate from 1-deoxy-D-xylulose 5-phosphate: step 1/6. Catalyzes the NADPH-dependent rearrangement and reduction of 1-deoxy-D-xylulose-5-phosphate (DXP) to 2-C-methyl-D-erythritol 4-phosphate (MEP). The polypeptide is 1-deoxy-D-xylulose 5-phosphate reductoisomerase (Rhodopseudomonas palustris (strain BisA53)).